Reading from the N-terminus, the 162-residue chain is uncharacterized protein (162 aa).

The signal sequence occupies residues 1–19 (MARVYILFFSVFFVFPLFS). The next 2 helical transmembrane spans lie at 53-75 (LSIGAFPIVTLLSFITYDIIRLI) and 105-127 (IVFGVAVGISVTIGLIDVTYRAV).

The protein resides in the cell membrane. This is an uncharacterized protein from Treponema pallidum (strain Nichols).